The following is a 364-amino-acid chain: Methylthioribose-1-phosphate isomerase (364 aa).

Asp254 serves as the catalytic Proton donor.

The protein belongs to the eIF-2B alpha/beta/delta subunits family. MtnA subfamily.

Its subcellular location is the cytoplasm. It localises to the nucleus. It catalyses the reaction 5-(methylsulfanyl)-alpha-D-ribose 1-phosphate = 5-(methylsulfanyl)-D-ribulose 1-phosphate. It functions in the pathway amino-acid biosynthesis; L-methionine biosynthesis via salvage pathway; L-methionine from S-methyl-5-thio-alpha-D-ribose 1-phosphate: step 1/6. Catalyzes the interconversion of methylthioribose-1-phosphate (MTR-1-P) into methylthioribulose-1-phosphate (MTRu-1-P). The chain is Methylthioribose-1-phosphate isomerase from Drosophila erecta (Fruit fly).